Reading from the N-terminus, the 688-residue chain is MTTETLLIELGTEELPPKSLKTLATAFYDNIKGQLDSHNLSYSDIKWFATPRRFAVQVFDLVEKQDDKIVEKRGPAVNVAFDDAGNASKAAQGWARSNGIEVDQAERLVTGKGEWLLHRATVSGKAVVELIPDMVTTALNKLPIAKPMRWGAERTQFIRPVQTLTMLFGSDIIAGEALGVSSSNQVQGHRFHHEGLVTINHANDYQAELAKAYVEVDFNERQNKIVAQIKQVANDIDAVALIDEELLNEVTALVEWPVTLVGTFDEDFLNVPAEPLIYSMKDHQKYFPVTDKNGQLVNKFIFVTNIESKDPNTIIFGNEKVIRPRLADAEFFFKTDKKQSLESRLKSLESVLFQKQLGTLKAKSERIASLSQFIAEQLNENAQDAYRAGLLSKTDLMSDMVLEFPQVQGTMGKYYALHDGENENIAQALEDQYRPRFAGDSLPEANIGCAVAISDKIDSLVGIFGINQAPKGDKDPFALRRAAIGSIRIIIEKQLDLDLSTLINKSIELFGDKLVNENTATDVLEFIMGRFRAFYQEQGISVDVIQAVLAKKPSAPLDFEKRIKAVTFFGELPEAATLAAANKRVGNILAKFDGELYQSFNTDLATEQAERDLADIYRDISLKVAPLMADKNYQAALSELAQLKAPIDTFFDGVMVMSDDEAVKINRLTLLNQIRNSFFAIADISVLQ.

This sequence belongs to the class-II aminoacyl-tRNA synthetase family. In terms of assembly, tetramer of two alpha and two beta subunits.

Its subcellular location is the cytoplasm. The catalysed reaction is tRNA(Gly) + glycine + ATP = glycyl-tRNA(Gly) + AMP + diphosphate. In Colwellia psychrerythraea (strain 34H / ATCC BAA-681) (Vibrio psychroerythus), this protein is Glycine--tRNA ligase beta subunit.